The chain runs to 620 residues: 1-deoxy-D-xylulose-5-phosphate synthase (620 aa).

Thiamine diphosphate-binding positions include histidine 75 and 116–118; that span reads AHS. Residue aspartate 147 participates in Mg(2+) binding. Thiamine diphosphate-binding positions include 148-149, asparagine 177, tyrosine 284, and glutamate 366; that span reads GA. Asparagine 177 lines the Mg(2+) pocket.

This sequence belongs to the transketolase family. DXPS subfamily. As to quaternary structure, homodimer. Mg(2+) serves as cofactor. The cofactor is thiamine diphosphate.

The enzyme catalyses D-glyceraldehyde 3-phosphate + pyruvate + H(+) = 1-deoxy-D-xylulose 5-phosphate + CO2. The protein operates within metabolic intermediate biosynthesis; 1-deoxy-D-xylulose 5-phosphate biosynthesis; 1-deoxy-D-xylulose 5-phosphate from D-glyceraldehyde 3-phosphate and pyruvate: step 1/1. Functionally, catalyzes the acyloin condensation reaction between C atoms 2 and 3 of pyruvate and glyceraldehyde 3-phosphate to yield 1-deoxy-D-xylulose-5-phosphate (DXP). The sequence is that of 1-deoxy-D-xylulose-5-phosphate synthase from Bordetella bronchiseptica (strain ATCC BAA-588 / NCTC 13252 / RB50) (Alcaligenes bronchisepticus).